The sequence spans 51 residues: Large ribosomal subunit protein eL39 (51 aa).

It belongs to the eukaryotic ribosomal protein eL39 family.

This Sulfurisphaera tokodaii (strain DSM 16993 / JCM 10545 / NBRC 100140 / 7) (Sulfolobus tokodaii) protein is Large ribosomal subunit protein eL39.